The sequence spans 180 residues: uncharacterized protein (180 aa).

Transmembrane regions (helical) follow at residues 37–59 and 128–147; these read VLHAAAAVTEYAFVLSTLVFPSF and AGSATLFAGAAGAALRVLFV.

Its subcellular location is the cell membrane. This is an uncharacterized protein from Treponema pallidum (strain Nichols).